The chain runs to 254 residues: Imidazole glycerol phosphate synthase subunit HisF (254 aa).

Residues Asp-12 and Asp-131 contribute to the active site.

The protein belongs to the HisA/HisF family. Heterodimer of HisH and HisF.

The protein resides in the cytoplasm. It catalyses the reaction 5-[(5-phospho-1-deoxy-D-ribulos-1-ylimino)methylamino]-1-(5-phospho-beta-D-ribosyl)imidazole-4-carboxamide + L-glutamine = D-erythro-1-(imidazol-4-yl)glycerol 3-phosphate + 5-amino-1-(5-phospho-beta-D-ribosyl)imidazole-4-carboxamide + L-glutamate + H(+). It participates in amino-acid biosynthesis; L-histidine biosynthesis; L-histidine from 5-phospho-alpha-D-ribose 1-diphosphate: step 5/9. Its function is as follows. IGPS catalyzes the conversion of PRFAR and glutamine to IGP, AICAR and glutamate. The HisF subunit catalyzes the cyclization activity that produces IGP and AICAR from PRFAR using the ammonia provided by the HisH subunit. The polypeptide is Imidazole glycerol phosphate synthase subunit HisF (Kocuria rhizophila (strain ATCC 9341 / DSM 348 / NBRC 103217 / DC2201)).